The following is a 71-amino-acid chain: Putative antitoxin VapB14 (71 aa).

In terms of biological role, putative antitoxin component of a possible type II toxin-antitoxin (TA) system. The cognate toxin is VapB14. This Mycobacterium tuberculosis (strain ATCC 25618 / H37Rv) protein is Putative antitoxin VapB14 (vapB14).